The sequence spans 251 residues: Tungstate/molybdate/chromate-binding protein ModA (251 aa).

Residues 1 to 23 (MTTRLPQLLLALLASAVSLAASA) form the signal peptide. Molybdate is bound by residues threonine 60 and isoleucine 168.

This sequence belongs to the bacterial solute-binding protein ModA family. As to quaternary structure, the complex is composed of two ATP-binding proteins (ModC), two transmembrane proteins (ModB) and a solute-binding protein (ModA).

It is found in the periplasm. Functionally, part of the ABC transporter complex ModABC involved in the transport of molybdenum into the cell. Binds tungstate and molybdate. Can also bind chromate, with lower affinity. Plays an essential role in recruitment of molybdate for nitrate reduction. The sequence is that of Tungstate/molybdate/chromate-binding protein ModA from Pseudomonas aeruginosa (strain ATCC 15692 / DSM 22644 / CIP 104116 / JCM 14847 / LMG 12228 / 1C / PRS 101 / PAO1).